A 225-amino-acid chain; its full sequence is Protein-disulfide oxidoreductase DsbI (225 aa).

A helical membrane pass occupies residues 27–47 (FLWLLMAIAMGGLIILAHSFF). Residues Cys-56 and Cys-59 are joined by a disulfide bond. The next 2 membrane-spanning stretches (helical) occupy residues 65 to 85 (AMFVMVIGGVIAAINPKNIVL) and 87 to 107 (LIGCIAAFYGSIMGIKFSIKL). Cys-128 and Cys-154 form a disulfide bridge. A helical transmembrane segment spans residues 199–219 (CMLAFGLCLILLLVMSGAWAL).

It belongs to the DsbB family. DsbI subfamily. In terms of assembly, interacts with DsbL.

It localises to the cell inner membrane. Functionally, required for disulfide bond formation in some proteins. Part of a redox system composed of DsbI and DsbL that mediates formation of an essential disulfide bond in AssT. This Salmonella choleraesuis (strain SC-B67) protein is Protein-disulfide oxidoreductase DsbI.